The following is a 227-amino-acid chain: Acyl-protein thioesterase 1 (227 aa).

Active-site charge relay system residues include Ser-119, Asp-173, and His-207.

It belongs to the AB hydrolase superfamily. AB hydrolase 2 family.

It is found in the cytoplasm. The protein localises to the nucleus. It catalyses the reaction S-hexadecanoyl-L-cysteinyl-[protein] + H2O = L-cysteinyl-[protein] + hexadecanoate + H(+). Functionally, hydrolyzes fatty acids from S-acylated cysteine residues in proteins with a strong preference for palmitoylated G-alpha proteins over other acyl substrates. Mediates the deacylation of G-alpha proteins such as GPA1 in vivo, but has weak or no activity toward palmitoylated Ras proteins. Has weak lysophospholipase activity in vitro; however such activity may not exist in vivo. This is Acyl-protein thioesterase 1 from Yarrowia lipolytica (strain CLIB 122 / E 150) (Yeast).